The following is a 75-amino-acid chain: Small ribosomal subunit protein bS18 (75 aa).

Belongs to the bacterial ribosomal protein bS18 family. In terms of assembly, part of the 30S ribosomal subunit. Forms a tight heterodimer with protein bS6.

Binds as a heterodimer with protein bS6 to the central domain of the 16S rRNA, where it helps stabilize the platform of the 30S subunit. This is Small ribosomal subunit protein bS18 from Glaesserella parasuis serovar 5 (strain SH0165) (Haemophilus parasuis).